A 177-amino-acid chain; its full sequence is ATP synthase subunit delta (177 aa).

Belongs to the ATPase delta chain family. As to quaternary structure, F-type ATPases have 2 components, F(1) - the catalytic core - and F(0) - the membrane proton channel. F(1) has five subunits: alpha(3), beta(3), gamma(1), delta(1), epsilon(1). F(0) has three main subunits: a(1), b(2) and c(10-14). The alpha and beta chains form an alternating ring which encloses part of the gamma chain. F(1) is attached to F(0) by a central stalk formed by the gamma and epsilon chains, while a peripheral stalk is formed by the delta and b chains.

The protein resides in the cell inner membrane. F(1)F(0) ATP synthase produces ATP from ADP in the presence of a proton or sodium gradient. F-type ATPases consist of two structural domains, F(1) containing the extramembraneous catalytic core and F(0) containing the membrane proton channel, linked together by a central stalk and a peripheral stalk. During catalysis, ATP synthesis in the catalytic domain of F(1) is coupled via a rotary mechanism of the central stalk subunits to proton translocation. In terms of biological role, this protein is part of the stalk that links CF(0) to CF(1). It either transmits conformational changes from CF(0) to CF(1) or is implicated in proton conduction. This is ATP synthase subunit delta from Citrobacter koseri (strain ATCC BAA-895 / CDC 4225-83 / SGSC4696).